A 359-amino-acid polypeptide reads, in one-letter code: Histidinol-phosphate aminotransferase (359 aa).

Position 212 is an N6-(pyridoxal phosphate)lysine (Lys-212).

This sequence belongs to the class-II pyridoxal-phosphate-dependent aminotransferase family. Histidinol-phosphate aminotransferase subfamily. Homodimer. The cofactor is pyridoxal 5'-phosphate.

The enzyme catalyses L-histidinol phosphate + 2-oxoglutarate = 3-(imidazol-4-yl)-2-oxopropyl phosphate + L-glutamate. The protein operates within amino-acid biosynthesis; L-histidine biosynthesis; L-histidine from 5-phospho-alpha-D-ribose 1-diphosphate: step 7/9. This is Histidinol-phosphate aminotransferase from Buchnera aphidicola subsp. Schlechtendalia chinensis.